The sequence spans 475 residues: NADH-quinone oxidoreductase subunit N (475 aa).

14 helical membrane passes run 5 to 25 (LALP…FGVV), 32 to 52 (FLSC…LVVM), 71 to 91 (FMKI…VGYA), 99 to 119 (FEFP…ASSE), 121 to 141 (LMTL…LCAF), 155 to 175 (YFVL…LVYG), 193 to 213 (STAV…GLTF), 232 to 252 (PTSV…ALLL), 266 to 286 (WQIL…LAAI), 294 to 314 (LMAY…CAGT), 322 to 342 (LVYL…IIAM), 366 to 386 (ATAM…AGFF), 389 to 409 (MMVF…IGVV), and 439 to 459 (LSLS…LLVL).

Belongs to the complex I subunit 2 family. In terms of assembly, NDH-1 is composed of 14 different subunits. Subunits NuoA, H, J, K, L, M, N constitute the membrane sector of the complex.

The protein localises to the cell inner membrane. It catalyses the reaction a quinone + NADH + 5 H(+)(in) = a quinol + NAD(+) + 4 H(+)(out). Functionally, NDH-1 shuttles electrons from NADH, via FMN and iron-sulfur (Fe-S) centers, to quinones in the respiratory chain. The immediate electron acceptor for the enzyme in this species is believed to be ubiquinone. Couples the redox reaction to proton translocation (for every two electrons transferred, four hydrogen ions are translocated across the cytoplasmic membrane), and thus conserves the redox energy in a proton gradient. This is NADH-quinone oxidoreductase subunit N from Gluconacetobacter diazotrophicus (strain ATCC 49037 / DSM 5601 / CCUG 37298 / CIP 103539 / LMG 7603 / PAl5).